A 418-amino-acid chain; its full sequence is Glutamyl-tRNA reductase (418 aa).

Substrate contacts are provided by residues 51–54, Ser-107, 112–114, and Gln-118; these read TCNR and EPQ. The active-site Nucleophile is Cys-52. Position 187 to 192 (187 to 192) interacts with NADP(+); that stretch reads GAGETA.

This sequence belongs to the glutamyl-tRNA reductase family. Homodimer.

It catalyses the reaction (S)-4-amino-5-oxopentanoate + tRNA(Glu) + NADP(+) = L-glutamyl-tRNA(Glu) + NADPH + H(+). Its pathway is porphyrin-containing compound metabolism; protoporphyrin-IX biosynthesis; 5-aminolevulinate from L-glutamyl-tRNA(Glu): step 1/2. Catalyzes the NADPH-dependent reduction of glutamyl-tRNA(Glu) to glutamate 1-semialdehyde (GSA). This chain is Glutamyl-tRNA reductase, found in Dichelobacter nodosus (strain VCS1703A).